Here is a 503-residue protein sequence, read N- to C-terminus: MKNIGWMLRQRATVSPRLQAYVEPSTDVRMTYAQMNALANRCADVLTALGIAKGDRVALLMPNSVEFCCLFYGAAKLGAVAVPINTRLAAPEVSFILSDSGSKVVIYGAPSAPVIDAIRAQADPPGTVTDWIGADSLAERLRSAAADEPAVECGGDDNLFIMYTSGTTGHPKGVVHTHESVHSAASSWASTIDVRYRDRLLLPLPMFHVAALTTVIFSAMRGVTLISMPQFDATKVWSLIVEERVCIGGAVPAILNFMRQVPEFAELDAPDFRYFITGGAPMPEALIKIYAAKNIEVVQGYALTESCGGGTLLLSEDALRKAGSAGRATMFTDVAVRGDDGVIREHGEGEVVIKSDILLKEYWNRPEATRDAFDNGWFRTGDIGEIDDEGYLYIKDRLKDMIISGGENVYPAEIESVIIGVPGVSEVAVIGLPDEKWGEIAAAIVVADQNEVSEQQIVEYCGTRLARYKLPKKVIFAEAIPRNPTGKILKTVLREQYSATVPK.

Belongs to the ATP-dependent AMP-binding enzyme family. As to quaternary structure, homodimer.

It localises to the cell membrane. The catalysed reaction is a long-chain fatty acid + ATP + CoA = a long-chain fatty acyl-CoA + AMP + diphosphate. It functions in the pathway lipid metabolism; fatty acid biosynthesis. Required for maintaining the appropriate mycolic acid composition and permeability of the envelope on its exposure to acidic pH. Catalyzes the activation of long-chain fatty acids as acyl-coenzyme A (acyl-CoA), which are then transferred to the multifunctional polyketide synthase (PKS) type III for further chain extension. This is Long-chain-fatty-acid--CoA ligase FadD13 (fadD13) from Mycobacterium tuberculosis (strain CDC 1551 / Oshkosh).